A 205-amino-acid chain; its full sequence is MPLIPMVIEQTSRGERAFDIYSRLLKDRIVFIGSAIDDETANLLIAQLLFLESEDPDKDINFYINSPGGKVSAGMAIYDTMQYIKSDIATVCIGHAASMGAFLLAAGAKGKRFSLPNSRIMIHQPMGGAQGQASDIAIQAKEILRMKDILNQILAHHTGKPLEQIQVDTDRDFFMSGEEAKAYGIVDHVITDRSDLDKLEKPQEA.

Serine 98 serves as the catalytic Nucleophile. Histidine 123 is a catalytic residue.

The protein belongs to the peptidase S14 family. In terms of assembly, fourteen ClpP subunits assemble into 2 heptameric rings which stack back to back to give a disk-like structure with a central cavity, resembling the structure of eukaryotic proteasomes.

The protein resides in the cytoplasm. The catalysed reaction is Hydrolysis of proteins to small peptides in the presence of ATP and magnesium. alpha-casein is the usual test substrate. In the absence of ATP, only oligopeptides shorter than five residues are hydrolyzed (such as succinyl-Leu-Tyr-|-NHMec, and Leu-Tyr-Leu-|-Tyr-Trp, in which cleavage of the -Tyr-|-Leu- and -Tyr-|-Trp bonds also occurs).. Its function is as follows. Cleaves peptides in various proteins in a process that requires ATP hydrolysis. Has a chymotrypsin-like activity. Plays a major role in the degradation of misfolded proteins. The polypeptide is ATP-dependent Clp protease proteolytic subunit (Desulfosudis oleivorans (strain DSM 6200 / JCM 39069 / Hxd3) (Desulfococcus oleovorans)).